The following is a 70-amino-acid chain: Large ribosomal subunit protein bL31 (70 aa).

It belongs to the bacterial ribosomal protein bL31 family. Type A subfamily. Part of the 50S ribosomal subunit.

Its function is as follows. Binds the 23S rRNA. The chain is Large ribosomal subunit protein bL31 from Chlorobium chlorochromatii (strain CaD3).